The primary structure comprises 109 residues: Small ribosomal subunit protein uS10 (109 aa).

Belongs to the universal ribosomal protein uS10 family. In terms of assembly, part of the 30S ribosomal subunit.

In terms of biological role, involved in the binding of tRNA to the ribosomes. This chain is Small ribosomal subunit protein uS10, found in Nanoarchaeum equitans (strain Kin4-M).